The following is a 368-amino-acid chain: UDP-N-acetylenolpyruvoylglucosamine reductase (368 aa).

In terms of domain architecture, FAD-binding PCMH-type spans 32–199 (IGGKPRSAVR…LAIELQLLTD (168 aa)). The active site involves arginine 177. Serine 257 functions as the Proton donor in the catalytic mechanism. Glutamate 358 is an active-site residue.

It belongs to the MurB family. The cofactor is FAD.

Its subcellular location is the cytoplasm. It carries out the reaction UDP-N-acetyl-alpha-D-muramate + NADP(+) = UDP-N-acetyl-3-O-(1-carboxyvinyl)-alpha-D-glucosamine + NADPH + H(+). Its pathway is cell wall biogenesis; peptidoglycan biosynthesis. Its function is as follows. Cell wall formation. This chain is UDP-N-acetylenolpyruvoylglucosamine reductase, found in Corynebacterium glutamicum (strain R).